The chain runs to 249 residues: 2,3-bisphosphoglycerate-dependent phosphoglycerate mutase (249 aa).

Substrate is bound by residues 8–15 (RHGQSAWN), 21–22 (TG), Arg60, 87–90 (ERHY), Lys98, 114–115 (RR), and 183–184 (GN). His9 acts as the Tele-phosphohistidine intermediate in catalysis. The active-site Proton donor/acceptor is Glu87. The segment at 115–137 (RSYDTPPPPLPADDPRSPAGDAR) is disordered.

The protein belongs to the phosphoglycerate mutase family. BPG-dependent PGAM subfamily. Homodimer.

The catalysed reaction is (2R)-2-phosphoglycerate = (2R)-3-phosphoglycerate. It functions in the pathway carbohydrate degradation; glycolysis; pyruvate from D-glyceraldehyde 3-phosphate: step 3/5. Functionally, catalyzes the interconversion of 2-phosphoglycerate and 3-phosphoglycerate. This is 2,3-bisphosphoglycerate-dependent phosphoglycerate mutase from Nitratidesulfovibrio vulgaris (strain DSM 19637 / Miyazaki F) (Desulfovibrio vulgaris).